The sequence spans 341 residues: Methionine import ATP-binding protein MetN 3 (341 aa).

Residues Ile-2 to Val-241 enclose the ABC transporter domain. Gly-38 to Ser-45 provides a ligand contact to ATP.

This sequence belongs to the ABC transporter superfamily. Methionine importer (TC 3.A.1.24) family. The complex is composed of two ATP-binding proteins (MetN), two transmembrane proteins (MetI) and a solute-binding protein (MetQ).

The protein localises to the cell membrane. It catalyses the reaction L-methionine(out) + ATP + H2O = L-methionine(in) + ADP + phosphate + H(+). The catalysed reaction is D-methionine(out) + ATP + H2O = D-methionine(in) + ADP + phosphate + H(+). Functionally, part of the ABC transporter complex MetNIQ involved in methionine import. Responsible for energy coupling to the transport system. The protein is Methionine import ATP-binding protein MetN 3 of Bacillus cereus (strain ZK / E33L).